The following is a 125-amino-acid chain: MORF4 family-associated protein 1 (125 aa).

Residues 76-99 (ESALNHLQGAGGAEPRGPRAEKAD) are disordered. Residues 94–124 (RAEKADEKAQEMAKMAEMLVQLVRRIEKSES) are a coiled coil.

The protein belongs to the MORF4 family-associated protein family. In terms of assembly, found in a complex composed of MORF4L1, MRFAP1 and RB1. Interacts via its N-terminus with MORF4L1. Interacts with CSTB and MORF4L2. In terms of tissue distribution, widely expressed in all tissues examined and as early as 7 days during embryonic development.

It localises to the nucleus. The protein resides in the cytoplasm. It is found in the perinuclear region. This is MORF4 family-associated protein 1 from Mus musculus (Mouse).